A 331-amino-acid chain; its full sequence is ABSCISIC ACID-INSENSITIVE 5-like protein 1 (331 aa).

A phosphoserine mark is found at Ser-40 and Ser-98. Thr-143 carries the post-translational modification Phosphothreonine. Residues 247–310 (MERRQRRMIK…RQEIISRSKQ (64 aa)) enclose the bZIP domain. Residues 249–268 (RRQRRMIKNRESAARSRARR) are basic motif. Residues 275–289 (LELELNNLTEENTKL) form a leucine-zipper region. Residues 296–320 (NEKKRRQEIISRSKQVTKEKSGDKL) show a composition bias toward basic and acidic residues. Residues 296–331 (NEKKRRQEIISRSKQVTKEKSGDKLRKIRRMASAGW) form a disordered region.

This sequence belongs to the bZIP family. ABI5 subfamily. In terms of assembly, DNA-binding heterodimer with AREB3/DPBF3 or EEL/DPBF4. Interacts with the AFP proteins AFP1, AFP2 and AFP3. In terms of tissue distribution, predominantly expressed in seeds.

The protein localises to the nucleus. In terms of biological role, could participate in abscisic acid-regulated gene expression during seed development. The sequence is that of ABSCISIC ACID-INSENSITIVE 5-like protein 1 (DPBF2) from Arabidopsis thaliana (Mouse-ear cress).